Consider the following 136-residue polypeptide: Pilotin AspS 2 (136 aa).

The signal sequence occupies residues 1 to 24 (MSIKQMPGRVLISLLLSVTGLLSG). Cys25 is lipidated: N-palmitoyl cysteine. Residue Cys25 is the site of S-diacylglycerol cysteine attachment. Cys94 and Cys131 are oxidised to a cystine.

This sequence belongs to the GspS/AspS pilotin family. Cryo-electron microscopy shows that the complex forms a cylindrical channel with 15 GspD2 subunits, each of which interacts with its surrounding AspS2 (GspS-beta).

The protein localises to the cell outer membrane. Functionally, part of a type II secretion system (T2SS, formerly general secretion pathway, GSP) for the export of folded proteins across the outer membrane. Required for correct assembly of the type II secretion system-beta (T2SS-beta), for localization of GspD-beta to the cell outer membrane and for export of a labile enterotoxin by T2SS-beta. Each AspS2 binds to 2 GspD2 subunits and may clamp the monomers together, stabilizing structure and accelerating its assembly. This chain is Pilotin AspS 2, found in Escherichia coli O78:H11 (strain H10407 / ETEC).